Consider the following 82-residue polypeptide: Small ribosomal subunit protein uS15 (82 aa).

The protein belongs to the universal ribosomal protein uS15 family. Part of the 30S ribosomal subunit. Forms a bridge to the 50S subunit in the 70S ribosome, contacting the 23S rRNA.

Its function is as follows. One of the primary rRNA binding proteins, it binds directly to 16S rRNA where it helps nucleate assembly of the platform of the 30S subunit by binding and bridging several RNA helices of the 16S rRNA. Functionally, forms an intersubunit bridge (bridge B4) with the 23S rRNA of the 50S subunit in the ribosome. The sequence is that of Small ribosomal subunit protein uS15 from Pelagibacter ubique (strain HTCC1062).